The following is a 132-amino-acid chain: Small ribosomal subunit protein uS8 (132 aa).

It belongs to the universal ribosomal protein uS8 family. In terms of assembly, part of the 30S ribosomal subunit. Contacts proteins S5 and S12.

In terms of biological role, one of the primary rRNA binding proteins, it binds directly to 16S rRNA central domain where it helps coordinate assembly of the platform of the 30S subunit. In Rhizobium rhizogenes (strain K84 / ATCC BAA-868) (Agrobacterium radiobacter), this protein is Small ribosomal subunit protein uS8.